A 136-amino-acid polypeptide reads, in one-letter code: Cell wall synthesis protein CwsA (136 aa).

Residues 94–114 traverse the membrane as a helical segment; sequence LLIAAVAVTVLGGGAAAFSIV.

Belongs to the CwsA family. As to quaternary structure, interacts with CrgA and Wag31.

The protein localises to the cell membrane. Required for regulated cell division, cell wall synthesis and the maintenance of cell shape. This chain is Cell wall synthesis protein CwsA, found in Mycolicibacterium smegmatis (strain ATCC 700084 / mc(2)155) (Mycobacterium smegmatis).